A 792-amino-acid chain; its full sequence is RNA-binding protein RRM4 (792 aa).

A disordered region spans residues 37 to 60; the sequence is TDSTAQASHAAEQTIDAHQQAGDV. 3 consecutive RRM domains span residues 72–145, 154–235, and 321–398; these read PLLY…QDAS, KPRL…IDTA, and CNLF…LHEP. Residues 412–424 show a composition bias toward low complexity; it reads AANADNSDMSSNS. 2 disordered regions span residues 412 to 438 and 630 to 649; these read AANADNSDMSSNSPPTEARKADKRQSR and DESGEDLSPPRASSGSAPVP. The span at 640 to 649 shows a compositional bias: polar residues; that stretch reads RASSGSAPVP. One can recognise a PABC domain in the interval 715 to 792; sequence ATDDFIDSLQ…QHKVAAGLNK (78 aa).

The protein belongs to the polyadenylate-binding protein type-1 family. As to quaternary structure, part of large ribonucleoprotein complexes (mRNPs) containing RNA-binding proteins RRM4 and PAB1, endosome-binding protein UPA1, core scaffold protein UPA2 and associated factor GRP1. Interacts (via PABC domain) with UPA1 (via PAM2 domain).

It localises to the cytoplasm. The protein resides in the cytoskeleton. It is found in the endosome. Key RNA-binding protein involved in the formation of polar-growing hyphae which is essential for infection by the plant pathogen. During filamentation, assembles into particles that shuttle bidirectionally along microtubules to both poles. The RRM4 transport particles are part of the endosomal mRNP transport that regulates polarity of the infectious hyphae by transporting distinct mRNAs encoding, for example, the ubiquitin fusion protein UBI1, the small G protein RHO3, or the septin CDC3, from the nucleus to cell poles. Recognizes a broad spectrum of cargo mRNAs and precisely binds at stop codons, which constitute landmark sites of translation, suggesting an intimate connection of mRNA transport and translation. Also binds to the specific binding motif UAUG of cargo mRNAs via its third RRM. Plus-end-directed KIN3, a kinesin-3 type motor, mediates anterograde transport of RRM4-containing mRNPs whereas split dynein DYM1-DYN2 functions in retrograde movement of mRNPs. The sequence is that of RNA-binding protein RRM4 from Mycosarcoma maydis (Corn smut fungus).